The following is a 403-amino-acid chain: Argininosuccinate synthase (403 aa).

Residues 10–18 (AYSGGVDTS) and alanine 38 contribute to the ATP site. Tyrosine 89 contributes to the L-citrulline binding site. Glycine 119 is an ATP binding site. The L-aspartate site is built by threonine 121, asparagine 125, and aspartate 126. Asparagine 125 is a binding site for L-citrulline. The L-citrulline site is built by arginine 129, serine 177, serine 186, glutamate 262, and tyrosine 274.

The protein belongs to the argininosuccinate synthase family. Type 1 subfamily. In terms of assembly, homotetramer.

The protein resides in the cytoplasm. The enzyme catalyses L-citrulline + L-aspartate + ATP = 2-(N(omega)-L-arginino)succinate + AMP + diphosphate + H(+). The protein operates within amino-acid biosynthesis; L-arginine biosynthesis; L-arginine from L-ornithine and carbamoyl phosphate: step 2/3. In Synechococcus sp. (strain CC9605), this protein is Argininosuccinate synthase.